A 365-amino-acid polypeptide reads, in one-letter code: ATP-dependent (S)-NAD(P)H-hydrate dehydratase (365 aa).

A chloroplast-targeting transit peptide spans 1 to 43; sequence MLVKPSIISGLVRLTSHSPSSSSSVLRRQEFLVRTLCGSPIIR. Leu2 bears the N-acetylserine mark. The YjeF C-terminal domain occupies 53–361; the sequence is AESVLRTVTP…ECLGESLEDI (309 aa). Residues Gly169 and 222–228 each bind (6S)-NADPHX; that span reads NVNEYKR. Residues 262-266 and 281-290 contribute to the ATP site; these read KGKSD and GSPRRCGGQG. Asp291 serves as a coordination point for (6S)-NADPHX.

Belongs to the NnrD/CARKD family. Mg(2+) serves as cofactor.

The protein resides in the plastid. Its subcellular location is the chloroplast. It is found in the cytoplasm. The catalysed reaction is (6S)-NADHX + ATP = ADP + phosphate + NADH + H(+). It carries out the reaction (6S)-NADPHX + ATP = ADP + phosphate + NADPH + H(+). In terms of biological role, catalyzes the dehydration of the S-form of NAD(P)HX at the expense of ATP, which is converted to ADP. Together with NAD(P)HX epimerase, which catalyzes the epimerization of the S- and R-forms, the enzyme allows the repair of both epimers of NAD(P)HX, a damaged form of NAD(P)H that is a result of enzymatic or heat-dependent hydration. This is ATP-dependent (S)-NAD(P)H-hydrate dehydratase from Arabidopsis thaliana (Mouse-ear cress).